A 122-amino-acid polypeptide reads, in one-letter code: MIQTQSMLDVADNSGARRVMCIKVLGGSHRRYAGIGDIIKVTVKEAIPRGKVKKGQVMTAVVVRTRHGVRRADGSIIRFDGNAAVLLNNKQEPIGTRIFGPVTRELRTEKFMKIVSLAPEVL.

This sequence belongs to the universal ribosomal protein uL14 family. In terms of assembly, part of the 50S ribosomal subunit. Forms a cluster with proteins L3 and L19. In the 70S ribosome, L14 and L19 interact and together make contacts with the 16S rRNA in bridges B5 and B8.

Binds to 23S rRNA. Forms part of two intersubunit bridges in the 70S ribosome. The polypeptide is Large ribosomal subunit protein uL14 (Pseudomonas savastanoi pv. phaseolicola (strain 1448A / Race 6) (Pseudomonas syringae pv. phaseolicola (strain 1448A / Race 6))).